Here is a 156-residue protein sequence, read N- to C-terminus: MNATKAPGGIKPKHQRLVLLVIALVALIGAGLLAAYALSNQASYFYVPNDLVKNPPEQGRAIRLGGMVQKGSLKTRADGITIDFVVGDGKARVPVRYTGITPDLFVEGSGVVAEGRMEGQTFVADNLLAKHDENYVPRQMGDMTKAQAEAVVAETK.

Over 1 to 16 the chain is Cytoplasmic; that stretch reads MNATKAPGGIKPKHQR. Residues 17–37 traverse the membrane as a helical; Signal-anchor for type II membrane protein segment; sequence LVLLVIALVALIGAGLLAAYA. Over 38–156 the chain is Periplasmic; it reads LSNQASYFYV…QAEAVVAETK (119 aa). The heme site is built by H131 and Y135.

Belongs to the CcmE/CycJ family.

It is found in the cell inner membrane. Its function is as follows. Heme chaperone required for the biogenesis of c-type cytochromes. Transiently binds heme delivered by CcmC and transfers the heme to apo-cytochromes in a process facilitated by CcmF and CcmH. This chain is Cytochrome c-type biogenesis protein CcmE, found in Novosphingobium aromaticivorans (strain ATCC 700278 / DSM 12444 / CCUG 56034 / CIP 105152 / NBRC 16084 / F199).